We begin with the raw amino-acid sequence, 345 residues long: Protein D345L (345 aa).

Belongs to the asfivirus D345L family. As to quaternary structure, interacts with IKKA/CHUK and IKBKB.

It is found in the host cytoplasm. In terms of biological role, plays a role in the negative regulation of host NF-kappa-B signaling pathway. Mechanistically, recruits host IKKA/CHUK and IKBKB to suppress their kinase activity towards NFKBIA. The sequence is that of Protein D345L from African swine fever virus (strain Badajoz 1971 Vero-adapted) (Ba71V).